The chain runs to 517 residues: Bifunctional purine biosynthesis protein PurH (517 aa).

Residues 1–145 (MSPLALVSVS…KNHKDVSVLV (145 aa)) enclose the MGS-like domain.

Belongs to the PurH family.

The catalysed reaction is (6R)-10-formyltetrahydrofolate + 5-amino-1-(5-phospho-beta-D-ribosyl)imidazole-4-carboxamide = 5-formamido-1-(5-phospho-D-ribosyl)imidazole-4-carboxamide + (6S)-5,6,7,8-tetrahydrofolate. It catalyses the reaction IMP + H2O = 5-formamido-1-(5-phospho-D-ribosyl)imidazole-4-carboxamide. Its pathway is purine metabolism; IMP biosynthesis via de novo pathway; 5-formamido-1-(5-phospho-D-ribosyl)imidazole-4-carboxamide from 5-amino-1-(5-phospho-D-ribosyl)imidazole-4-carboxamide (10-formyl THF route): step 1/1. The protein operates within purine metabolism; IMP biosynthesis via de novo pathway; IMP from 5-formamido-1-(5-phospho-D-ribosyl)imidazole-4-carboxamide: step 1/1. The sequence is that of Bifunctional purine biosynthesis protein PurH from Prochlorococcus marinus (strain AS9601).